The sequence spans 1239 residues: DNA topoisomerase 2 (1239 aa).

ATP-binding positions include asparagine 65, asparagine 96, 124 to 126, 137 to 144, and 354 to 356; these read SSN, GRHGYGAK, and QSK. The Toprim domain maps to 434 to 548; the sequence is RTLIVTEGDS…SLLQHNPGYI (115 aa). Mg(2+) contacts are provided by glutamate 440, aspartate 517, and aspartate 519. Positions 685 to 1101 constitute a Topo IIA-type catalytic domain; the sequence is IPHCVDGLKP…TPVKMWLTDL (417 aa). Residue tyrosine 775 is the O-(5'-phospho-DNA)-tyrosine intermediate of the active site. Residues 956 to 965 are interaction with DNA; the sequence is ALSQRIYING. The disordered stretch occupies residues 1167-1206; it reads PASKRKPEDTYGGALSSGGSTRNVGKRLTGARGAKKKKVV.

This sequence belongs to the type II topoisomerase family. As to quaternary structure, homodimer. Requires Mg(2+) as cofactor. Mn(2+) serves as cofactor. The cofactor is Ca(2+).

The protein resides in the nucleus. It is found in the mitochondrion matrix. It localises to the kinetoplast. The enzyme catalyses ATP-dependent breakage, passage and rejoining of double-stranded DNA.. Its function is as follows. Control of topological states of DNA by transient breakage and subsequent rejoining of DNA strands. Topoisomerase II makes double-strand breaks. In Crithidia fasciculata, this protein is DNA topoisomerase 2 (TOP2).